We begin with the raw amino-acid sequence, 482 residues long: Glutamyl-tRNA(Gln) amidotransferase subunit A (482 aa).

Active-site charge relay system residues include Lys75 and Ser150. Ser174 serves as the catalytic Acyl-ester intermediate.

It belongs to the amidase family. GatA subfamily. As to quaternary structure, heterotrimer of A, B and C subunits.

It carries out the reaction L-glutamyl-tRNA(Gln) + L-glutamine + ATP + H2O = L-glutaminyl-tRNA(Gln) + L-glutamate + ADP + phosphate + H(+). Allows the formation of correctly charged Gln-tRNA(Gln) through the transamidation of misacylated Glu-tRNA(Gln) in organisms which lack glutaminyl-tRNA synthetase. The reaction takes place in the presence of glutamine and ATP through an activated gamma-phospho-Glu-tRNA(Gln). The polypeptide is Glutamyl-tRNA(Gln) amidotransferase subunit A (Deinococcus radiodurans (strain ATCC 13939 / DSM 20539 / JCM 16871 / CCUG 27074 / LMG 4051 / NBRC 15346 / NCIMB 9279 / VKM B-1422 / R1)).